Here is a 495-residue protein sequence, read N- to C-terminus: MALSFGYLQRDNSFKKDSQECETPRIRKTPVNMYLEKTLSFKDLVDQRNNYRDGNCGVKTRKGINLKGPKPDNMILDRSLSFTSLVQVENRGGEEEDERGSSPKRRNRGNLTALSLPAPTPFWSPRPSTELDAAAVTLQKVYKSYRTRRNLADCAVVVEELWWKELELAKLEPNKTNDKPESAVSRWARAGTKAAKVGKGLLKDDKAQKLALRHWLEAIDPRHRYGHNLHLYYDVWSESESTQPFFFWLDIGDGKEVNLNKCSRTLLQRQCITYLGPKERQAYEVVVEDGKLVSRQTKSLVETTEGTKWIFVLSTTRKLYIGQKQKGRFQHSSFLSGAAITAAGRIVSHDGVVKAVWPYSGHYLPTEENFREFICFLRENHVNLTNVKMNAIDDDDHLVNNDGSTKPSMMVAKSDGSDEQKRFSCKWSTGNGPRIGCVRDYPMDLQTRALEQVNLSPRVVNGTMGLFGPIPSPRPSPKIRVSPRLSCMGLPSPRH.

The tract at residues 89 to 122 is disordered; that stretch reads ENRGGEEEDERGSSPKRRNRGNLTALSLPAPTPF. The IQ domain maps to 131-160; the sequence is LDAAAVTLQKVYKSYRTRRNLADCAVVVEE.

In terms of tissue distribution, expressed in roots, rosette and cauline leaves, and at lower levels in stems, flowers and siliques.

It is found in the cytoplasm. The protein localises to the nucleus. Functionally, may be involved in biotic and abiotic stress responses. In Arabidopsis thaliana (Mouse-ear cress), this protein is IQ domain-containing protein IQM5.